The sequence spans 401 residues: Acetate kinase (401 aa).

Residue Asn9 coordinates Mg(2+). Residue Lys16 participates in ATP binding. Residue Arg88 participates in substrate binding. Asp147 acts as the Proton donor/acceptor in catalysis. ATP is bound by residues 207–211 (HLGNG), 282–284 (DCR), and 333–337 (GIGEN). Glu388 contributes to the Mg(2+) binding site.

It belongs to the acetokinase family. As to quaternary structure, homodimer. Requires Mg(2+) as cofactor. Mn(2+) is required as a cofactor.

The protein resides in the cytoplasm. The enzyme catalyses acetate + ATP = acetyl phosphate + ADP. The protein operates within metabolic intermediate biosynthesis; acetyl-CoA biosynthesis; acetyl-CoA from acetate: step 1/2. In terms of biological role, catalyzes the formation of acetyl phosphate from acetate and ATP. Can also catalyze the reverse reaction. This is Acetate kinase from Haemophilus influenzae (strain PittEE).